Consider the following 310-residue polypeptide: MSKIFVFGHQNPDSDAIGSSYGYAYLKRQLGVEAEAVALGTPNEETAFVLDYFSVNAPRVVESAQSEGVNQVILTDHNEFQQSISDIKDVEVIEVVDHHRVANFETANPLMMRLEPVGSASSIVYRMFKENNVEIPKDVAGLLLSGLISDTLLLKSPTTHASDPAVAEELARLAGVNLEEYGLAMLKAGTNLSSKSAEELIDIDAKTFELNGNQVRVAQVNTVDISDVLSRQAEIEEAINSSIKSNGYSDFVLMITDILNSNSEILALGSNTDKIEKAFNFVLENNHAFLKGAVSRKKQVVPQLTESFNV.

The Mn(2+) site is built by H9, D13, D15, D76, H98, and D150.

The protein belongs to the PPase class C family. Requires Mn(2+) as cofactor.

The protein localises to the cytoplasm. The enzyme catalyses diphosphate + H2O = 2 phosphate + H(+). This Streptococcus thermophilus (strain CNRZ 1066) protein is Probable manganese-dependent inorganic pyrophosphatase.